The sequence spans 130 residues: Iron-sulfur cluster insertion protein ErpA (130 aa).

Positions 58, 122, and 124 each coordinate iron-sulfur cluster.

Belongs to the HesB/IscA family. In terms of assembly, homodimer. The cofactor is iron-sulfur cluster.

Required for insertion of 4Fe-4S clusters for at least IspG. In Stenotrophomonas maltophilia (strain K279a), this protein is Iron-sulfur cluster insertion protein ErpA.